We begin with the raw amino-acid sequence, 412 residues long: Proline-rich protein 30 (412 aa).

Polar residues-rich tracts occupy residues 1 to 15 and 23 to 39; these read MLPQNKDQVLPQTSV and GFSQLVDSSPHNLQPLS. 3 disordered regions span residues 1 to 88, 123 to 174, and 317 to 412; these read MLPQ…HPYS, PLTP…SNRQ, and RPKE…KSSV. Composition is skewed to low complexity over residues 50–59, 126–142, and 334–350; these read PFSSTQSRRP, PSFSPSQPQNSSLPHSP, and QLPASQPPAAQARADPV. The segment covering 353–372 has biased composition (polar residues); the sequence is TPSQTRSFRSAGLQSPNSPR.

This is Proline-rich protein 30 (PRR30) from Homo sapiens (Human).